The chain runs to 356 residues: Peptide methionine sulfoxide reductase MsrA/MsrB (356 aa).

The interval 46–199 (HEIYLAGGCF…PNGYCHIDLE (154 aa)) is peptide methionine sulfoxide reductase A. C54 is an active-site residue. Residues 216–339 (DAELKAKLTP…NSAAVKFIPL (124 aa)) form the MsrB domain. C328 (nucleophile) is an active-site residue.

The protein in the N-terminal section; belongs to the MsrA Met sulfoxide reductase family. In the C-terminal section; belongs to the MsrB Met sulfoxide reductase family.

It carries out the reaction L-methionyl-[protein] + [thioredoxin]-disulfide + H2O = L-methionyl-(S)-S-oxide-[protein] + [thioredoxin]-dithiol. The catalysed reaction is [thioredoxin]-disulfide + L-methionine + H2O = L-methionine (S)-S-oxide + [thioredoxin]-dithiol. The enzyme catalyses L-methionyl-[protein] + [thioredoxin]-disulfide + H2O = L-methionyl-(R)-S-oxide-[protein] + [thioredoxin]-dithiol. In terms of biological role, has an important function as a repair enzyme for proteins that have been inactivated by oxidation. Catalyzes the reversible oxidation-reduction of methionine sulfoxide in proteins to methionine. This chain is Peptide methionine sulfoxide reductase MsrA/MsrB (msrAB), found in Aggregatibacter actinomycetemcomitans (Actinobacillus actinomycetemcomitans).